A 406-amino-acid polypeptide reads, in one-letter code: Cyclin-dependent kinase 4 homolog (406 aa).

The Protein kinase domain occupies 102–388; sequence TFLFQALGKG…ARGALSHPFL (287 aa). ATP-binding positions include 108–116 and lysine 131; that span reads LGKGAYGNV. Catalysis depends on aspartate 233, which acts as the Proton acceptor. Asparagine 238 and aspartate 251 together coordinate Mg(2+).

This sequence belongs to the protein kinase superfamily. CMGC Ser/Thr protein kinase family. CDC2/CDKX subfamily. As to quaternary structure, interacts with cyd-1; the interaction is likely involved in regulating cdk-4 activity. Requires Mg(2+) as cofactor.

The enzyme catalyses L-seryl-[protein] + ATP = O-phospho-L-seryl-[protein] + ADP + H(+). It carries out the reaction L-threonyl-[protein] + ATP = O-phospho-L-threonyl-[protein] + ADP + H(+). In terms of biological role, serine/threonine-protein kinase which, in association with cyclin D-like protein cyd-1, is required for the progression through the G1 phase of the cell cycle during postembryonic development by phosphorylating and inhibiting lin-35 and fzr-1. In complex with cyd-1, involved in sex determination during gonadogenesis by regulating the asymmetric division of the somatic gonadal precursor cell (SGP). In Caenorhabditis elegans, this protein is Cyclin-dependent kinase 4 homolog.